The following is a 353-amino-acid chain: Thiamine-phosphate synthase (353 aa).

The unknown stretch occupies residues M1–G128. The segment at L129–A353 is thiamine-phosphate synthase. Residues Q185 to K189 and N217 contribute to the 4-amino-2-methyl-5-(diphosphooxymethyl)pyrimidine site. Residues D218 and D237 each contribute to the Mg(2+) site. S256 contacts 4-amino-2-methyl-5-(diphosphooxymethyl)pyrimidine. T282–T284 lines the 2-[(2R,5Z)-2-carboxy-4-methylthiazol-5(2H)-ylidene]ethyl phosphate pocket. K285 contacts 4-amino-2-methyl-5-(diphosphooxymethyl)pyrimidine. Position 312 (G312) interacts with 2-[(2R,5Z)-2-carboxy-4-methylthiazol-5(2H)-ylidene]ethyl phosphate.

It belongs to the thiamine-phosphate synthase family. The cofactor is Mg(2+).

It carries out the reaction 2-[(2R,5Z)-2-carboxy-4-methylthiazol-5(2H)-ylidene]ethyl phosphate + 4-amino-2-methyl-5-(diphosphooxymethyl)pyrimidine + 2 H(+) = thiamine phosphate + CO2 + diphosphate. It catalyses the reaction 2-(2-carboxy-4-methylthiazol-5-yl)ethyl phosphate + 4-amino-2-methyl-5-(diphosphooxymethyl)pyrimidine + 2 H(+) = thiamine phosphate + CO2 + diphosphate. The catalysed reaction is 4-methyl-5-(2-phosphooxyethyl)-thiazole + 4-amino-2-methyl-5-(diphosphooxymethyl)pyrimidine + H(+) = thiamine phosphate + diphosphate. It participates in cofactor biosynthesis; thiamine diphosphate biosynthesis; thiamine phosphate from 4-amino-2-methyl-5-diphosphomethylpyrimidine and 4-methyl-5-(2-phosphoethyl)-thiazole: step 1/1. In terms of biological role, condenses 4-methyl-5-(beta-hydroxyethyl)thiazole monophosphate (THZ-P) and 2-methyl-4-amino-5-hydroxymethyl pyrimidine pyrophosphate (HMP-PP) to form thiamine monophosphate (TMP). This Synechococcus sp. (strain CC9311) protein is Thiamine-phosphate synthase.